Reading from the N-terminus, the 226-residue chain is MSLSAFYVTGTDTGIGKTFVSCILLHMLRGRGQRAVGMKPVASGCTYSDTGWRNEDALALQAASDPTPAYDLINPYALPAAVAPEIAAIEARVTVALEPLSASFTQLRAQADVVVVEGVGGWATPLNATIDQATLVRALEIPVVLVVGLRLGCMNHARLSTAAIMADGLRCIGWIANTIDPHMARIEENLALLRQRLPIPYWGHLPHIPPGINPATLATRLHPQGD.

14 to 19 (GIGKTF) serves as a coordination point for ATP. Position 18 (threonine 18) interacts with Mg(2+). Lysine 39 is an active-site residue. Serine 43 contributes to the substrate binding site. ATP-binding positions include aspartate 56, 117–120 (EGVG), 177–178 (NT), 206–208 (PHI), and asparagine 213. The Mg(2+) site is built by aspartate 56 and glutamate 117.

The protein belongs to the dethiobiotin synthetase family. As to quaternary structure, homodimer. It depends on Mg(2+) as a cofactor.

It is found in the cytoplasm. It carries out the reaction (7R,8S)-7,8-diammoniononanoate + CO2 + ATP = (4R,5S)-dethiobiotin + ADP + phosphate + 3 H(+). It functions in the pathway cofactor biosynthesis; biotin biosynthesis; biotin from 7,8-diaminononanoate: step 1/2. In terms of biological role, catalyzes a mechanistically unusual reaction, the ATP-dependent insertion of CO2 between the N7 and N8 nitrogen atoms of 7,8-diaminopelargonic acid (DAPA, also called 7,8-diammoniononanoate) to form a ureido ring. This chain is ATP-dependent dethiobiotin synthetase BioD, found in Xylella fastidiosa (strain M12).